A 512-amino-acid chain; its full sequence is D-alanine--D-alanyl carrier protein ligase (512 aa).

152–153 (TS) contacts ATP. A D-alanine-binding site is contributed by aspartate 199. 294 to 299 (NAYGPT) contributes to the ATP binding site. D-alanine is bound at residue valine 303. ATP-binding positions include aspartate 385, 397 to 400 (YGGR), and lysine 499. Lysine 499 contributes to the D-alanine binding site.

The protein belongs to the ATP-dependent AMP-binding enzyme family. DltA subfamily.

The protein localises to the cytoplasm. The catalysed reaction is holo-[D-alanyl-carrier protein] + D-alanine + ATP = D-alanyl-[D-alanyl-carrier protein] + AMP + diphosphate. Its pathway is cell wall biogenesis; lipoteichoic acid biosynthesis. Functionally, catalyzes the first step in the D-alanylation of lipoteichoic acid (LTA), the activation of D-alanine and its transfer onto the D-alanyl carrier protein (Dcp) DltC. In an ATP-dependent two-step reaction, forms a high energy D-alanyl-AMP intermediate, followed by transfer of the D-alanyl residue as a thiol ester to the phosphopantheinyl prosthetic group of the Dcp. D-alanylation of LTA plays an important role in modulating the properties of the cell wall in Gram-positive bacteria, influencing the net charge of the cell wall. The protein is D-alanine--D-alanyl carrier protein ligase of Streptococcus pyogenes serotype M3 (strain SSI-1).